A 459-amino-acid polypeptide reads, in one-letter code: Interleukin-7 receptor subunit alpha (459 aa).

Residues 1 to 20 (MTILGTTFGMVFSLLQVVSG) form the signal peptide. Residues 21–239 (ESGYAQNGDL…EINNSSGEMD (219 aa)) are Extracellular-facing. Cys42 and Cys57 are disulfide-bonded. 2 N-linked (GlcNAc...) asparagine glycosylation sites follow: Asn49 and Asn65. Intrachain disulfides connect Cys74–Cys82 and Cys108–Cys118. Positions 131 to 231 (APFDLSVVYR…PSYYFRTPEI (101 aa)) constitute a Fibronectin type-III domain. Residues Asn151 and Asn182 are each glycosylated (N-linked (GlcNAc...) asparagine). The WSXWS motif signature appears at 217-221 (WSEWS). N-linked (GlcNAc...) asparagine glycosylation is found at Asn232 and Asn233. A helical transmembrane segment spans residues 240–264 (PILLTISILSFFSVALLVILACVLW). Residues 265-459 (KKRIKPIVWP…VTMSSFYQNQ (195 aa)) lie on the Cytoplasmic side of the membrane. The short motif at 272 to 280 (VWPSLPDHK) is the Box 1 motif element. Thr282 carries the phosphothreonine; by PKC modification.

This sequence belongs to the type I cytokine receptor family. Type 4 subfamily. In terms of assembly, the IL7 receptor is a heterodimer of IL7R and IL2RG. The TSLP receptor is a heterodimer of CRLF2 and IL7R. Interacts with CD53. Post-translationally, N-glycosylated IL-7Ralpha binds IL7 300-fold more tightly than the unglycosylated form. In terms of processing, ubiquitinated by MARCHF8; leading to lysosomal degradation.

It localises to the cell membrane. The protein resides in the secreted. In terms of biological role, receptor for interleukin-7. Also acts as a receptor for thymic stromal lymphopoietin (TSLP). In Homo sapiens (Human), this protein is Interleukin-7 receptor subunit alpha (IL7R).